Here is a 223-residue protein sequence, read N- to C-terminus: Small ribosomal subunit protein uS3 (223 aa).

The region spanning Ile39–Lys115 is the KH type-2 domain.

It belongs to the universal ribosomal protein uS3 family. In terms of assembly, part of the 30S ribosomal subunit. Forms a tight complex with proteins S10 and S14.

Binds the lower part of the 30S subunit head. Binds mRNA in the 70S ribosome, positioning it for translation. The protein is Small ribosomal subunit protein uS3 of Leuconostoc mesenteroides subsp. mesenteroides (strain ATCC 8293 / DSM 20343 / BCRC 11652 / CCM 1803 / JCM 6124 / NCDO 523 / NBRC 100496 / NCIMB 8023 / NCTC 12954 / NRRL B-1118 / 37Y).